A 257-amino-acid polypeptide reads, in one-letter code: Deoxyribose-phosphate aldolase (257 aa).

Aspartate 102 (proton donor/acceptor) is an active-site residue. Residue lysine 166 is the Schiff-base intermediate with acetaldehyde of the active site. The Proton donor/acceptor role is filled by lysine 198.

It belongs to the DeoC/FbaB aldolase family. DeoC type 2 subfamily.

Its subcellular location is the cytoplasm. The enzyme catalyses 2-deoxy-D-ribose 5-phosphate = D-glyceraldehyde 3-phosphate + acetaldehyde. The protein operates within carbohydrate degradation; 2-deoxy-D-ribose 1-phosphate degradation; D-glyceraldehyde 3-phosphate and acetaldehyde from 2-deoxy-alpha-D-ribose 1-phosphate: step 2/2. Its function is as follows. Catalyzes a reversible aldol reaction between acetaldehyde and D-glyceraldehyde 3-phosphate to generate 2-deoxy-D-ribose 5-phosphate. This is Deoxyribose-phosphate aldolase from Shewanella sediminis (strain HAW-EB3).